A 29-amino-acid polypeptide reads, in one-letter code: Cytochrome b6-f complex subunit 8 (29 aa).

The chain crosses the membrane as a helical span at residues 3–23; it reads IVSIAWAALMVVFTFSLSLVV.

This sequence belongs to the PetN family. In terms of assembly, the 4 large subunits of the cytochrome b6-f complex are cytochrome b6, subunit IV (17 kDa polypeptide, PetD), cytochrome f and the Rieske protein, while the 4 small subunits are PetG, PetL, PetM and PetN. The complex functions as a dimer.

It is found in the plastid. It localises to the chloroplast thylakoid membrane. Its function is as follows. Component of the cytochrome b6-f complex, which mediates electron transfer between photosystem II (PSII) and photosystem I (PSI), cyclic electron flow around PSI, and state transitions. The sequence is that of Cytochrome b6-f complex subunit 8 from Angiopteris evecta (Mule's foot fern).